The sequence spans 413 residues: Multifunctional CCA protein (413 aa).

G8 and R11 together coordinate ATP. Positions 8 and 11 each coordinate CTP. Positions 21 and 23 each coordinate Mg(2+). Residues R91, R137, and R140 each contribute to the ATP site. CTP contacts are provided by R91, R137, and R140. Residues 228–329 (TGIHTLMVLE…VKIFDKADLW (102 aa)) enclose the HD domain.

Belongs to the tRNA nucleotidyltransferase/poly(A) polymerase family. Bacterial CCA-adding enzyme type 1 subfamily. In terms of assembly, monomer. Can also form homodimers and oligomers. The cofactor is Mg(2+). Requires Ni(2+) as cofactor.

It carries out the reaction a tRNA precursor + 2 CTP + ATP = a tRNA with a 3' CCA end + 3 diphosphate. It catalyses the reaction a tRNA with a 3' CCA end + 2 CTP + ATP = a tRNA with a 3' CCACCA end + 3 diphosphate. In terms of biological role, catalyzes the addition and repair of the essential 3'-terminal CCA sequence in tRNAs without using a nucleic acid template. Adds these three nucleotides in the order of C, C, and A to the tRNA nucleotide-73, using CTP and ATP as substrates and producing inorganic pyrophosphate. tRNA 3'-terminal CCA addition is required both for tRNA processing and repair. Also involved in tRNA surveillance by mediating tandem CCA addition to generate a CCACCA at the 3' terminus of unstable tRNAs. While stable tRNAs receive only 3'-terminal CCA, unstable tRNAs are marked with CCACCA and rapidly degraded. The protein is Multifunctional CCA protein of Shewanella sediminis (strain HAW-EB3).